The primary structure comprises 631 residues: tRNA uridine 5-carboxymethylaminomethyl modification enzyme MnmG (631 aa).

15–20 (GAGHAG) is a binding site for FAD. A disordered region spans residues 214–233 (YSKTEEEPGDKEPRHFSFTS). An NAD(+)-binding site is contributed by 276–290 (GPRYCPSIETKVVRF).

It belongs to the MnmG family. As to quaternary structure, homodimer. Heterotetramer of two MnmE and two MnmG subunits. FAD serves as cofactor.

It localises to the cytoplasm. NAD-binding protein involved in the addition of a carboxymethylaminomethyl (cmnm) group at the wobble position (U34) of certain tRNAs, forming tRNA-cmnm(5)s(2)U34. The protein is tRNA uridine 5-carboxymethylaminomethyl modification enzyme MnmG of Lactobacillus delbrueckii subsp. bulgaricus (strain ATCC 11842 / DSM 20081 / BCRC 10696 / JCM 1002 / NBRC 13953 / NCIMB 11778 / NCTC 12712 / WDCM 00102 / Lb 14).